A 438-amino-acid polypeptide reads, in one-letter code: MKDNILSALKEKISRQNWESWFLDFNVKKIEDKHVVFEVGNIFIKDRLEQKFSKIISKVVKESLGKDATFEIVYKEIDITQENEEKGPLVRKRPLLITPLNPKYTFENFVVGNFNRFAYNVFLEASKKPGYYNPIFLYSGVGLGKTHLAQALGNFLLENDPDLKVAYLTSEDFMNEMFYAIKNGTTEEFREKYRKKADILIIDDIQFLIGIKSAQVELFHTFNAIHEAGKQIIICSDRTPQELKDFHSRMISRFQMGLLVKIENPTKEDLFKIGKKISKLKGVEINDEIIDYISSIYDNPRLIHGAILKLIAYKNLYGSLNLSIAQSILTNPSKPPKALEEKLIEILSDIFECSPEEILSSKRTKNISYARKVGMYYAAKKLNLSTRDVGKVFNKSHSSVVQNISQVEKLIKEGNIIIKNYLKQIDKATKNFAQGESI.

The segment at 1 to 68 is domain I, interacts with DnaA modulators; sequence MKDNILSALK…VVKESLGKDA (68 aa). The tract at residues 68–98 is domain II; that stretch reads ATFEIVYKEIDITQENEEKGPLVRKRPLLIT. A domain III, AAA+ region region spans residues 99–314; it reads PLNPKYTFEN…GAILKLIAYK (216 aa). ATP is bound by residues G142, G144, K145, and T146. Residues 315–438 form a domain IV, binds dsDNA region; it reads NLYGSLNLSI…TKNFAQGESI (124 aa).

The protein belongs to the DnaA family. In terms of assembly, oligomerizes as a right-handed, spiral filament on DNA at oriC.

The protein localises to the cytoplasm. Plays an essential role in the initiation and regulation of chromosomal replication. ATP-DnaA binds to the origin of replication (oriC) to initiate formation of the DNA replication initiation complex once per cell cycle. Binds the DnaA box (a 9 base pair repeat at the origin) and separates the double-stranded (ds)DNA. Forms a right-handed helical filament on oriC DNA; dsDNA binds to the exterior of the filament while single-stranded (ss)DNA is stabiized in the filament's interior. The ATP-DnaA-oriC complex binds and stabilizes one strand of the AT-rich DNA unwinding element (DUE), permitting loading of DNA polymerase. After initiation quickly degrades to an ADP-DnaA complex that is not apt for DNA replication. Binds acidic phospholipids. The protein is Chromosomal replication initiator protein DnaA of Thermosipho africanus (strain TCF52B).